A 746-amino-acid polypeptide reads, in one-letter code: Ferric enterobactin receptor (746 aa).

Positions 1–25 (MSSRALPAVPFLLLSSCLLANAVHA) are cleaved as a signal peptide. Positions 39–44 (QTVVAT) match the TonB box motif. The TBDR plug domain occupies 47 to 174 (EETKQAPGVS…AGGVVNIITK (128 aa)). Disordered stretches follow at residues 82–102 (VNLTGNSSSGQRGNNRQIDIR), 235–254 (GHESNRTGKQAGTLPAGREG), and 397–424 (QKLDDPSSNTQNTEEGGSIPGLAGKNRS). Residues 84–98 (LTGNSSSGQRGNNRQ) show a composition bias toward polar residues. One can recognise a TBDR beta-barrel domain in the interval 179–746 (ETHGNLSVYS…TFYTSLTASF (568 aa)). Polar residues predominate over residues 402–411 (PSSNTQNTEE). The TonB C-terminal box motif lies at 729-746 (ATYNEPGRTFYTSLTASF).

The protein belongs to the TonB-dependent receptor family.

The protein localises to the cell outer membrane. Its function is as follows. Specific receptor for the siderophore ferric enterobactin. This chain is Ferric enterobactin receptor (pfeA), found in Pseudomonas aeruginosa (strain ATCC 15692 / DSM 22644 / CIP 104116 / JCM 14847 / LMG 12228 / 1C / PRS 101 / PAO1).